A 290-amino-acid polypeptide reads, in one-letter code: Endoplasmic reticulum-Golgi intermediate compartment protein 1 (290 aa).

Residues Met-1–Ala-26 lie on the Cytoplasmic side of the membrane. Residues Ile-27–Phe-47 traverse the membrane as a helical segment. Residues Ile-48–Thr-254 lie on the Lumenal side of the membrane. Asn-74 carries N-linked (GlcNAc...) asparagine glycosylation. The helical transmembrane segment at Thr-255–Phe-275 threads the bilayer. Residues Thr-276–His-290 lie on the Cytoplasmic side of the membrane.

This sequence belongs to the ERGIC family. As to quaternary structure, may form a heteromeric complex composed of ERGIC1, ERGIC2 and ERGIC3. Within the complex, the interaction with ERGIC3 is direct. Interacts with ERGIC3/ERV46. N-glycosylated.

It is found in the endoplasmic reticulum membrane. Its subcellular location is the endoplasmic reticulum-Golgi intermediate compartment membrane. The protein resides in the golgi apparatus membrane. Its function is as follows. Possible role in transport between endoplasmic reticulum and Golgi. The sequence is that of Endoplasmic reticulum-Golgi intermediate compartment protein 1 (ERGIC1) from Homo sapiens (Human).